A 212-amino-acid chain; its full sequence is Inactive ribonuclease-like protein 10 (212 aa).

An N-terminal signal peptide occupies residues 1–24 (MKLTLVQIFFMMLLLLLGLGVGLG).

The protein belongs to the pancreatic ribonuclease family. Post-translationally, the N-terminus is blocked. Glycosylated. As to expression, male-specific expression in proximal caput of the epididymis.

It localises to the secreted. In terms of biological role, secreted proximal epididymal protein required for post-testicular sperm maturation and male fertility. May be involved in sperm adhesion to the egg zona pellucida. Does not have ribonuclease activity. The chain is Inactive ribonuclease-like protein 10 (RNASE10) from Ovis aries (Sheep).